The primary structure comprises 400 residues: WD repeat and FYVE domain-containing protein 2 (400 aa).

WD repeat units follow at residues 22-61, 66-105, 112-150, 153-192, 197-236, and 240-279; these read GSQEVVNMAVIVPKEEGVISVSEDRTVRVWLKRDSGQYWP, AMPSPCSCMSFNPETRRLSIGLDNGTISEFILSEDYNKMT, AHQSRVTMVLFVLELEWVLSTGQDKQFAWHCSESGQRLG, RTSAVASGLQFDVETRHVFIGDHSGQVTILKLEQENCTLL, GHTGGVTALCWDPVQRVLFSGSSDHSVIMWDIGGRKGTAI, and GHNDKVQALSYAQHTRQLISCGGDGGIVVWNMDVERQETP. The segment at 281–352 adopts an FYVE-type zinc-finger fold; it reads WLDSDSCQKC…VCDSCHEAIT (72 aa). Zn(2+)-binding residues include Cys287, Cys290, Cys314, Cys317, Cys322, Cys325, Cys344, and Cys347. The stretch at 364-399 is one WD 7 repeat; sequence DSKHNIVHVHFDATRGWLLTSGTDKVIKLWDMTPVV.

In terms of assembly, homodimer. Interacts (via WD repeats 1-3) with AKT1, AKT2, PRKCZ and PRKCI. Interacts with VAMP2. Forms a complex with VAMP2 and PRKCZ. Interacts with FOXO1. Forms a complex with AKT1 and FOXO1. Highly expressed in the brain (at protein level).

The protein resides in the endosome. It localises to the early endosome. Its subcellular location is the cytoplasm. In terms of biological role, acts in an adapter protein-like fashion to mediate the interaction between the kinase PRKCZ and its substrate VAMP2 and increases the PRKCZ-dependent phosphorylation of VAMP2. Positively regulates adipocyte differentiation, by facilitating the phosphorylation and thus inactivation of the anti-adipogenetic transcription factor FOXO1 by the kinase AKT1. Plays a role in endosomal control of AKT2 signaling; required for insulin-stimulated AKT2 phosphorylation and glucose uptake and insulin-stimulated phosphorylation of AKT2 substrates. Participates in transferrin receptor endocytosis. This chain is WD repeat and FYVE domain-containing protein 2 (Wdfy2), found in Mus musculus (Mouse).